Here is a 450-residue protein sequence, read N- to C-terminus: Na(+)/H(+) antiporter NhaA (450 aa).

11 consecutive transmembrane segments (helical) span residues 24 to 44 (FFAIEASSGILLMAATVLALV), 75 to 95 (LILWINDGLMAIFFFVVGLEI), 111 to 131 (ALPIAAAIGGMLVPAGIYLAL), 140 to 160 (GWGVPMATDIAFALGILSLLG), 169 to 189 (VFLTAVAIVDDLGAILVIAFF), 196 to 216 (FSFLMLGFAAFAVMLLLNWLG), 224 to 244 (LLVGLVLWFALLKSGVHATIA), 318 to 338 (WVAWFIMPVFALANAGVTVSA), 352 to 372 (IFFGLLLGKQGGVTLAVWLLV), 390 to 410 (GIGWLAGIGFTMAIFIATLAF), and 422 to 442 (SILCASFVAGFGGYMLMRVLL).

The protein belongs to the NhaA Na(+)/H(+) (TC 2.A.33) antiporter family.

The protein resides in the cell inner membrane. It carries out the reaction Na(+)(in) + 2 H(+)(out) = Na(+)(out) + 2 H(+)(in). Na(+)/H(+) antiporter that extrudes sodium in exchange for external protons. This is Na(+)/H(+) antiporter NhaA from Oleidesulfovibrio alaskensis (strain ATCC BAA-1058 / DSM 17464 / G20) (Desulfovibrio alaskensis).